A 795-amino-acid polypeptide reads, in one-letter code: Protein espinas (795 aa).

Residues 30 to 96 are disordered; the sequence is GTGLTFPPHR…FVSPLQRRHC (67 aa). The segment covering 52-66 has biased composition (low complexity); the sequence is ASMSSNVASTATSSN. The PET domain occupies 135–243; sequence LDFQRNSQSD…AVRLLSDERP (109 aa). LIM zinc-binding domains follow at residues 242–306, 307–367, and 368–430; these read RPCK…ETQK, PRCS…MFAE, and YCDY…GEPP. Disordered regions lie at residues 427 to 487 and 616 to 684; these read GEPP…GSAG and NRNT…EMQI. Basic and acidic residues-rich tracts occupy residues 459 to 471 and 637 to 649; these read RSGD…ESSR and LDNR…RFHS. The segment covering 650 to 662 has biased composition (polar residues); that stretch reads VQDTMSRSKSYTD. Over residues 666–675 the composition is skewed to basic residues; sequence ARRRRRRRNQ.

It belongs to the prickle / espinas / testin family.

This Drosophila pseudoobscura pseudoobscura (Fruit fly) protein is Protein espinas.